The sequence spans 257 residues: TLC domain-containing protein 3A (257 aa).

Transmembrane regions (helical) follow at residues 1 to 21 (MLLTLAGGALFFPGLFALCTW), 42 to 62 (LVSSVHAVLATGSGIVIIRSC), 77 to 97 (VWFLIPYMIYDSYAMYLCEWC), 113 to 135 (FLSRNRLMITHHAVILFVLVPVA), 142 to 162 (LGDFFVGCIFTAELSTPFVSL), 181 to 201 (GILTLATFLSCRILLFPFMYW), and 220 to 240 (FYCNVANAFLVAPQIYWFCLL). A TLC domain is found at 33 to 249 (TDCVMISTRL…LCRKAVRLFD (217 aa)).

As to quaternary structure, interacts with GGT7 isoform 3 and SLC3A2. Highly expressed in pancreas. Detected at intermediate levels in heart, placenta and kidney, and at low levels in brain, liver and skeletal muscle. Not detected in normal lung.

It localises to the cell membrane. The protein is TLC domain-containing protein 3A of Homo sapiens (Human).